Reading from the N-terminus, the 688-residue chain is Chaperone protein dnaK1 (688 aa).

T198 is modified (phosphothreonine; by autocatalysis). Over residues 630 to 661 (DLPRDSYRERDAYNNRDYGRDYGRDYGRDSRP) the composition is skewed to basic and acidic residues. Positions 630 to 688 (DLPRDSYRERDAYNNRDYGRDYGRDYGRDSRPSYDNSRPPRKSPRPSYQDNWDDDDDWL) are disordered.

The protein belongs to the heat shock protein 70 family.

In terms of biological role, acts as a chaperone. This Nostoc sp. (strain PCC 7120 / SAG 25.82 / UTEX 2576) protein is Chaperone protein dnaK1 (dnaK1).